The following is a 351-amino-acid chain: DNA polymerase IV (351 aa).

The 181-residue stretch at 4 to 184 (FIHIDMDCFY…LPLGKIPGVG (181 aa)) folds into the UmuC domain. Mg(2+)-binding residues include aspartate 8 and aspartate 102. Glutamate 103 is a catalytic residue.

It belongs to the DNA polymerase type-Y family. Monomer. It depends on Mg(2+) as a cofactor.

It is found in the cytoplasm. It catalyses the reaction DNA(n) + a 2'-deoxyribonucleoside 5'-triphosphate = DNA(n+1) + diphosphate. Functionally, poorly processive, error-prone DNA polymerase involved in untargeted mutagenesis. Copies undamaged DNA at stalled replication forks, which arise in vivo from mismatched or misaligned primer ends. These misaligned primers can be extended by PolIV. Exhibits no 3'-5' exonuclease (proofreading) activity. May be involved in translesional synthesis, in conjunction with the beta clamp from PolIII. The chain is DNA polymerase IV from Pseudoalteromonas translucida (strain TAC 125).